The sequence spans 1118 residues: Isoleucine--tRNA ligase (1118 aa).

The 'HIGH' region signature appears at 64 to 74 (PFANGLPHYGH). Positions 647–651 (KLSKR) match the 'KMSKS' region motif. Lys650 is a binding site for ATP.

The protein belongs to the class-I aminoacyl-tRNA synthetase family. IleS type 2 subfamily. Monomer. Zn(2+) serves as cofactor.

It localises to the cytoplasm. It carries out the reaction tRNA(Ile) + L-isoleucine + ATP = L-isoleucyl-tRNA(Ile) + AMP + diphosphate. Its function is as follows. Catalyzes the attachment of isoleucine to tRNA(Ile). As IleRS can inadvertently accommodate and process structurally similar amino acids such as valine, to avoid such errors it has two additional distinct tRNA(Ile)-dependent editing activities. One activity is designated as 'pretransfer' editing and involves the hydrolysis of activated Val-AMP. The other activity is designated 'posttransfer' editing and involves deacylation of mischarged Val-tRNA(Ile). This Ehrlichia ruminantium (strain Gardel) protein is Isoleucine--tRNA ligase.